Reading from the N-terminus, the 920-residue chain is Rho GTPase-activating protein REN1 (920 aa).

Residues 1–10 show a composition bias toward polar residues; sequence MANKNAESSS. A disordered region spans residues 1 to 64; sequence MANKNAESSS…SRGGNTVFKS (64 aa). Positions 17–31 are enriched in low complexity; the sequence is QPNQQQQQQPPIANE. The span at 45–64 shows a compositional bias: polar residues; the sequence is PAQSGNTDSRSRGGNTVFKS. The PH domain occupies 60–167; it reads TVFKSGPLSI…WKAALENALT (108 aa). The Rho-GAP domain occupies 213-412; it reads LALEDVDGAP…TLLEEYESIF (200 aa). Disordered regions lie at residues 417-592, 719-825, and 837-920; these read LSPG…NLSM, RLGH…ALSK, and RSQI…TFSR. The span at 434–463 shows a compositional bias: acidic residues; the sequence is EGSDDEEYDDDDDGSQGSEDYTDEEEDLEN. Residues 464 to 473 show a composition bias toward polar residues; sequence ESNGSYSESA. Composition is skewed to basic and acidic residues over residues 475–491, 499–509, and 520–532; these read SEDK…HKIN, KSPKRSKEPKK, and PRHD…EDIV. Residues 555–568 are compositionally biased toward polar residues; the sequence is SSTSDVASDTQKPS. A compositionally biased stretch (basic residues) spans 577 to 586; it reads SKRHWGRTPG. A coiled-coil region spans residues 598–728; sequence SVEVDEDNAD…RLGHHDGKAS (131 aa). 2 stretches are compositionally biased toward basic and acidic residues: residues 734–768 and 776–788; these read ASKE…RSTS and RENE…DSRS. Low complexity predominate over residues 814-825; sequence EGSTTTTSALSK. 2 stretches are compositionally biased toward polar residues: residues 854–864 and 872–885; these read GQPSPTSGQNR and GSGS…SKLQ. The segment covering 889-903 has biased composition (basic and acidic residues); it reads ILDRGRSENGGDRGR. The segment covering 910–920 has biased composition (polar residues); sequence HPNTTPRTFSR.

Interacts with ARAC11/ROP1. Expressed in pollen and pollen tubes.

It localises to the cell membrane. Acts as a GTPase activator for the Rac-type GTPase by converting it to an inactive GDP-bound state. Maintains the global inactivation of ARAC11/ROP1 at the apex in pollen tubes in order to regulate the polar cell growth. The protein is Rho GTPase-activating protein REN1 (REN1) of Arabidopsis thaliana (Mouse-ear cress).